The primary structure comprises 425 residues: Spermatogenesis- and oogenesis-specific basic helix-loop-helix-containing protein 2 (425 aa).

One can recognise a bHLH domain in the interval K201–I252.

In terms of assembly, forms both hetero- and homodimers with SOHLH1.

Its subcellular location is the nucleus. It is found in the cytoplasm. In terms of biological role, transcription regulator of both male and female germline differentiation. Suppresses genes involved in spermatogonial stem cells maintenance, and induces genes important for spermatogonial differentiation. Coordinates oocyte differentiation without affecting meiosis I. In Homo sapiens (Human), this protein is Spermatogenesis- and oogenesis-specific basic helix-loop-helix-containing protein 2 (SOHLH2).